The primary structure comprises 396 residues: Polygalacturonase (396 aa).

The first 22 residues, 1-22 (MDLKFKVHFALVLLFLAHFGES), serve as a signal peptide directing secretion. N-linked (GlcNAc...) asparagine glycans are attached at residues N143, N151, N174, N181, N203, and N208. PbH1 repeat units follow at residues 172-198 (CKNL…HVSR) and 199-220 (SSSV…SVGD). The active-site Proton donor is D213. C215 and C232 form a disulfide bridge. Residue H236 is part of the active site. 3 PbH1 repeats span residues 252–273 (VVGV…RIKT), 282–303 (VNDV…VIDQ), and 316–356 (PSQV…EVGD). Residues N259 and N294 are each glycosylated (N-linked (GlcNAc...) asparagine). A disordered region spans residues 364–396 (KEGPAKSSCENIKPSLKGKQNPPVCTASAASSS). A disulfide bridge connects residues C372 and C388.

This sequence belongs to the glycosyl hydrolase 28 family. As to expression, pollen.

The protein localises to the secreted. Its subcellular location is the cell wall. The catalysed reaction is (1,4-alpha-D-galacturonosyl)n+m + H2O = (1,4-alpha-D-galacturonosyl)n + (1,4-alpha-D-galacturonosyl)m.. Functionally, may function in depolymerizing pectin during pollen development, germination, and tube growth. The chain is Polygalacturonase (PG1) from Nicotiana tabacum (Common tobacco).